Reading from the N-terminus, the 172-residue chain is MTINLTDLIRNVPDFPVPGIQFKDITPLLQHGAAFKQVIDTLAARYEGRSLDAVVGVESRGFIFSAPLAYRLGIGLVPIRKPGKLPWETFAVEYDLEYGSNKLEMHRDALDPGARVVVIDDVLATGGTVAAACQLVETAGAVVEEVACLIELTLLKGRERLANYSFFSMLQY.

Belongs to the purine/pyrimidine phosphoribosyltransferase family. In terms of assembly, homodimer.

The protein resides in the cytoplasm. It catalyses the reaction AMP + diphosphate = 5-phospho-alpha-D-ribose 1-diphosphate + adenine. Its pathway is purine metabolism; AMP biosynthesis via salvage pathway; AMP from adenine: step 1/1. Functionally, catalyzes a salvage reaction resulting in the formation of AMP, that is energically less costly than de novo synthesis. The protein is Adenine phosphoribosyltransferase of Roseiflexus castenholzii (strain DSM 13941 / HLO8).